Consider the following 364-residue polypeptide: Aminomethyltransferase (364 aa).

This sequence belongs to the GcvT family. In terms of assembly, the glycine cleavage system is composed of four proteins: P, T, L and H.

The enzyme catalyses N(6)-[(R)-S(8)-aminomethyldihydrolipoyl]-L-lysyl-[protein] + (6S)-5,6,7,8-tetrahydrofolate = N(6)-[(R)-dihydrolipoyl]-L-lysyl-[protein] + (6R)-5,10-methylene-5,6,7,8-tetrahydrofolate + NH4(+). The glycine cleavage system catalyzes the degradation of glycine. This Shewanella piezotolerans (strain WP3 / JCM 13877) protein is Aminomethyltransferase.